The primary structure comprises 237 residues: DCN1-like protein 5 (237 aa).

S41 carries the post-translational modification Phosphoserine; by IKKA. The DCUN1 domain maps to 46–232 (FSRKKCLAWF…LLDEFVEWQK (187 aa)).

In terms of assembly, part of a complex that contains DCUN1D5, CUL1 and RBX1; this interaction is bridged by CUL1. Interacts (via the DCUN1 domain) with the unneddylated cullins: interacts with CUL1, CUL2, CUL3, CUL4A, CUL4B and CUL5; these interactions promote the cullin neddylation and the identity of the cullin dictates the affinity of the interaction. Interacts (via DCUN1 domain) with UBE2M (N-terminally acetylated form) and probably with UBE2F (N-terminally acetylated form). May also interact with regulators or subunits of cullin-RING ligases such as RBX1, RNF7, ELOB and DDB1; these interactions are bridged by cullins. Interacts with CAND1; this interaction is bridged by cullins and strongly inhibits the neddylation of cullins. These CAND-cullin-DCNL complexes can only be neddylated in the presence of a substrate adapter. Post-translationally, phosphorylation at Ser-41 is independent of cullin's interaction. Phosphorylated in response to both TICAM1 and MYD88 dependent Toll-like receptor (TLR) pathway activation. Phosphorylated in response to IL1B stimulation. As to expression, highly expressed in testis. Lower levels of expression in skin, thymus, spleen, lymph nodes, lung, brain, heart, skeletal muscles, kidney, liver an ovary.

Its subcellular location is the nucleus. The protein resides in the cytoplasm. The protein localises to the cytoskeleton. It is found in the spindle. Its function is as follows. Contributes to the neddylation of all cullins by transferring NEDD8 from N-terminally acetylated NEDD8-conjugating E2s enzyme to different cullin C-terminal domain-RBX complexes which is necessary for the activation of cullin-RING E3 ubiquitin ligases (CRLs). May play a role in DNA damage response and may participate in cell proliferation and anchorage-independent cell growth. The chain is DCN1-like protein 5 from Mus musculus (Mouse).